We begin with the raw amino-acid sequence, 402 residues long: Flavohemoprotein (402 aa).

A Globin domain is found at 1–136 (MLSEKTIEIV…IADAFISIEA (136 aa)). His85 is a heme b binding site. Active-site charge relay system residues include Tyr95 and Glu135. The reductase stretch occupies residues 147-402 (GGWKDFRNFV…EFFGPAASLQ (256 aa)). The 111-residue stretch at 150 to 260 (KDFRNFVVVK…SAPAGDFVLN (111 aa)) folds into the FAD-binding FR-type domain. FAD-binding positions include Tyr188 and 204–207 (RQYS). 273 to 278 (GVGITP) contributes to the NADP(+) binding site. 394-397 (FFGP) is a binding site for FAD.

Belongs to the globin family. Two-domain flavohemoproteins subfamily. It in the C-terminal section; belongs to the flavoprotein pyridine nucleotide cytochrome reductase family. Requires heme b as cofactor. The cofactor is FAD.

The catalysed reaction is 2 nitric oxide + NADPH + 2 O2 = 2 nitrate + NADP(+) + H(+). It catalyses the reaction 2 nitric oxide + NADH + 2 O2 = 2 nitrate + NAD(+) + H(+). Functionally, is involved in NO detoxification in an aerobic process, termed nitric oxide dioxygenase (NOD) reaction that utilizes O(2) and NAD(P)H to convert NO to nitrate, which protects the bacterium from various noxious nitrogen compounds. Therefore, plays a central role in the inducible response to nitrosative stress. This chain is Flavohemoprotein, found in Bacillus cereus (strain ATCC 10987 / NRS 248).